We begin with the raw amino-acid sequence, 483 residues long: Proline--tRNA ligase (483 aa).

Belongs to the class-II aminoacyl-tRNA synthetase family. ProS type 3 subfamily. As to quaternary structure, homodimer.

The protein resides in the cytoplasm. The catalysed reaction is tRNA(Pro) + L-proline + ATP = L-prolyl-tRNA(Pro) + AMP + diphosphate. Catalyzes the attachment of proline to tRNA(Pro) in a two-step reaction: proline is first activated by ATP to form Pro-AMP and then transferred to the acceptor end of tRNA(Pro). The chain is Proline--tRNA ligase from Sulfolobus acidocaldarius (strain ATCC 33909 / DSM 639 / JCM 8929 / NBRC 15157 / NCIMB 11770).